Reading from the N-terminus, the 368-residue chain is Trans-enoyl reductase TwmE (368 aa).

Residue 49–52 (SDYK) participates in NADP(+) binding. 135–142 (FKAATLGT) serves as a coordination point for substrate. Residues 204-207 (SPRS), Y222, and 269-270 (LE) contribute to the NADP(+) site. 290–294 (SAELY) is a binding site for substrate. 360–361 (HP) provides a ligand contact to NADP(+).

The protein belongs to the zinc-containing alcohol dehydrogenase family. In terms of assembly, monomer.

It functions in the pathway secondary metabolite biosynthesis. In terms of biological role, trans-enoyl reductase; part of the gene cluster that mediates the biosynthesis of wortmanamides A and B, reduced long-chain polyketides amidated with a specific omega-amino acid, 5-aminopentanoic acid (5PA). The PKS modules of TwmB are involved in the synthesis of the polyketide backbone, whereas the non-canonical C domain of TwmB is a bonafide condensation domain that specifically selects 5PA and catalyzes amidation to release polyketide chain. The C domain clearly prefers C16 and C18 fatty acyl substrates, which is consistent with simultaneous formation of both octaketide and nonaketide acyl amides wortmanamides A and B. Because TwmB lacks a designated enoylreductase (ER) domain, the required activity is provided the enoyl reductase TwmE. The roles of the remaining enzymes have still to be clarified. This chain is Trans-enoyl reductase TwmE, found in Talaromyces wortmannii (Penicillium wortmannii).